The following is a 50-amino-acid chain: Thrombin-like enzyme BpirSP41 (50 aa).

In terms of domain architecture, Peptidase S1 spans 1–50 (VVGGDECDINEHPFLAFLYSHGYFCGLTLINQEWVLTAAHCDRRFMRIYL). Cys25 and Cys41 are oxidised to a cystine. His40 serves as the catalytic Charge relay system.

Belongs to the peptidase S1 family. Snake venom subfamily. Monomer. In terms of processing, N-glycosylated. Expressed by the venom gland.

The protein localises to the secreted. Inhibited by serine protease inhibitors PMSF, benzamidine, leupeptin and aprotinin, as well as by copper ions (Cu2+). Not inhibited by metalloprotease inhibitors EDTA, EGTA and 1,10-phenanthroline, as well as by barium (Ba2+) and calcium ion (Ca2+). Snake venom serine protease that interferes with the hemostatic system of the prey. It almost completely degrades both Aalpha (FGA) and Bbeta (FGB) chains of fibrinogen. It presents a higher ability to degrade fibrin clots than BpirSP27. It hydrolyzes chromogenic substrates S-2238 (used for testing thrombin activity), S-2222 (factor Xa), S-2266 (glandular kallikrein and factor XIa), and S-2302 (plasma kallikrein, factor XIa and XIIa). It shows a decrease in the clotting time of human plasma in the presence of increasing doses of the enzyme. Its minimum coagulant dose (MCD) is 20 ug. It promotes platelet aggregation with a maximum of aggregation of 20%, regardless of the concentration increase or the presence of calcium. It also shows 40% inhibition of the hemolytic activity promoted by the complement pathways and possess only a minor role in the induction of edema and pain in rat. In Bothrops pirajai (Piraja's lancehead), this protein is Thrombin-like enzyme BpirSP41.